The chain runs to 81 residues: ATP synthase subunit c (81 aa).

Helical transmembrane passes span A6–I26 and L57–A77.

Belongs to the ATPase C chain family. F-type ATPases have 2 components, F(1) - the catalytic core - and F(0) - the membrane proton channel. F(1) has five subunits: alpha(3), beta(3), gamma(1), delta(1), epsilon(1). F(0) has four main subunits: a(1), b(1), b'(1) and c(10-14). The alpha and beta chains form an alternating ring which encloses part of the gamma chain. F(1) is attached to F(0) by a central stalk formed by the gamma and epsilon chains, while a peripheral stalk is formed by the delta, b and b' chains.

The protein localises to the cellular thylakoid membrane. Its function is as follows. F(1)F(0) ATP synthase produces ATP from ADP in the presence of a proton or sodium gradient. F-type ATPases consist of two structural domains, F(1) containing the extramembraneous catalytic core and F(0) containing the membrane proton channel, linked together by a central stalk and a peripheral stalk. During catalysis, ATP synthesis in the catalytic domain of F(1) is coupled via a rotary mechanism of the central stalk subunits to proton translocation. Functionally, key component of the F(0) channel; it plays a direct role in translocation across the membrane. A homomeric c-ring of between 10-14 subunits forms the central stalk rotor element with the F(1) delta and epsilon subunits. This chain is ATP synthase subunit c, found in Picosynechococcus sp. (strain ATCC 27264 / PCC 7002 / PR-6) (Agmenellum quadruplicatum).